A 461-amino-acid chain; its full sequence is MLKIFNTLSRQKEEFKPIHAGEVGMYVCGVTIYDLCHIGHGRTFVCFDVVARYLRYLGYRLKYVRNVTDVDDKIIKRALENQESCEQLTERMLAEMHRDFDALNIARPDVEPRATHHIAEIIALVEQLIARDHAYVASNGDVMFAVDTDPDYGVLSRQDLEQLQAGARVEVADVKRNPMDFVLWKMSKPGEPSWPSPWGEGRPGWHIECSAMNCKQLGSHFDIHGGGSDLMFPHHENEIAQSTCAHDGAYVNCWMHSGMVMIDREKMSKSLGNFFTIRDVLAHYDAETVRYFLMSGHYRSQLNYSEENLKQARAALERLYTALRGTDVAAQPTADETFTTRFRAAMDDDFNTPEAYSVLFDMAREINRLKGEDMAQANALAAQMRGLAHVLGLLEQTPEHFLQSGAAAGDDEVAQIEALIRQRNDARAAKAWALADEARDSLNAMGIVLEDGPQGTTWRRK.

Position 28 (cysteine 28) interacts with Zn(2+). The 'HIGH' region motif lies at valine 30–histidine 40. Zn(2+)-binding residues include cysteine 209, histidine 234, and glutamate 238. The 'KMSKS' region motif lies at lysine 266 to serine 270. Lysine 269 contributes to the ATP binding site.

The protein belongs to the class-I aminoacyl-tRNA synthetase family. Monomer. Zn(2+) is required as a cofactor.

It is found in the cytoplasm. The catalysed reaction is tRNA(Cys) + L-cysteine + ATP = L-cysteinyl-tRNA(Cys) + AMP + diphosphate. The chain is Cysteine--tRNA ligase from Edwardsiella ictaluri (strain 93-146).